The following is a 149-amino-acid chain: MGLEKSFILFSLLVLVLGWVQPSLSKESSADKFKRQHMDTEGSSNSSPTYCNQMMTRGDMTNGSCKPVNTFVHEPLADVQAICSQENVTCKNGKKNCYKSTSALHITDCRLKGNSKYPNCDYKTSDYQKHIIIACDGNPSVPVHFDATV.

A signal peptide spans 1 to 25; the sequence is MGLEKSFILFSLLVLVLGWVQPSLS. A compositionally biased stretch (basic and acidic residues) spans 30-40; sequence ADKFKRQHMDT. The segment at 30 to 49 is disordered; that stretch reads ADKFKRQHMDTEGSSNSSPT. Positions 32 and 35 each coordinate substrate. Catalysis depends on H37, which acts as the Proton acceptor. Intrachain disulfides connect C51/C109, C65/C120, C83/C135, and C90/C97. N62 is a glycosylation site (N-linked (GlcNAc...) asparagine). 66 to 70 contacts substrate; sequence KPVNT. N87 carries N-linked (GlcNAc...) asparagine glycosylation. K91 and R110 together coordinate substrate. H144 (proton donor) is an active-site residue.

Belongs to the pancreatic ribonuclease family. In terms of assembly, monomer. Interacts with and forms tight 1:1 complexes with RNH1. Dimerization of two such complexes may occur. Interaction with RNH1 inhibits this protein. Pancreas.

It is found in the secreted. It catalyses the reaction an [RNA] containing cytidine + H2O = an [RNA]-3'-cytidine-3'-phosphate + a 5'-hydroxy-ribonucleotide-3'-[RNA].. The enzyme catalyses an [RNA] containing uridine + H2O = an [RNA]-3'-uridine-3'-phosphate + a 5'-hydroxy-ribonucleotide-3'-[RNA].. Its function is as follows. Endonuclease that catalyzes the cleavage of RNA on the 3' side of pyrimidine nucleotides. Acts on single-stranded and double-stranded RNA. The polypeptide is Ribonuclease pancreatic (RNASE1) (Niviventer cremoriventer (Dark-tailed tree rat)).